Reading from the N-terminus, the 107-residue chain is MIIHFNKHSKKIILNIFLALLLVYFIFHCIYGNKGIIAYLKVNRQLEKAYDELKNLRAERVELEHNVKLLRTESLNKDMLEEQAKKILGIAAPNEQVFTIKDIASQR.

A helical transmembrane segment spans residues Ile-12 to Gly-32.

The protein localises to the membrane. This is an uncharacterized protein from Rickettsia prowazekii (strain Madrid E).